The following is a 950-amino-acid chain: Glycine dehydrogenase (decarboxylating) (950 aa).

Lysine 699 carries the post-translational modification N6-(pyridoxal phosphate)lysine.

This sequence belongs to the GcvP family. The glycine cleavage system is composed of four proteins: P, T, L and H. It depends on pyridoxal 5'-phosphate as a cofactor.

It carries out the reaction N(6)-[(R)-lipoyl]-L-lysyl-[glycine-cleavage complex H protein] + glycine + H(+) = N(6)-[(R)-S(8)-aminomethyldihydrolipoyl]-L-lysyl-[glycine-cleavage complex H protein] + CO2. The glycine cleavage system catalyzes the degradation of glycine. The P protein binds the alpha-amino group of glycine through its pyridoxal phosphate cofactor; CO(2) is released and the remaining methylamine moiety is then transferred to the lipoamide cofactor of the H protein. This Chromobacterium violaceum (strain ATCC 12472 / DSM 30191 / JCM 1249 / CCUG 213 / NBRC 12614 / NCIMB 9131 / NCTC 9757 / MK) protein is Glycine dehydrogenase (decarboxylating).